Here is a 405-residue protein sequence, read N- to C-terminus: Indoleamine 2,3-dioxygenase 2 (405 aa).

H347 provides a ligand contact to heme.

This sequence belongs to the indoleamine 2,3-dioxygenase family. Requires heme as cofactor. As to expression, expressed mainly in antigen-presenting immune cells, liver, kidney, brain, and placenta. Highly expressed in kidney, followed by epididymis and liver (at protein level). Detected in the tails of the spermatozoa in the testis and in the kidney tubules (at protein level). Constitutively expressed in brain.

It catalyses the reaction L-tryptophan + O2 = N-formyl-L-kynurenine. Its pathway is amino-acid degradation; L-tryptophan degradation via kynurenine pathway; L-kynurenine from L-tryptophan: step 1/2. Its activity is regulated as follows. Activity is inhibited by D-1MT (1-methyl-D-tryptophan) and MTH-trp (methylthiohydantoin-DL-tryptophan) but not L-1MT (1-methyl-L-tryptophan). Catalyzes the first and rate-limiting step in the kynurenine pathway of tryptophan catabolism. Involved in immune regulation. The chain is Indoleamine 2,3-dioxygenase 2 from Mus musculus (Mouse).